A 436-amino-acid polypeptide reads, in one-letter code: GTPase Der (436 aa).

EngA-type G domains follow at residues 4–167 and 175–351; these read PTVA…PNEI and IKFS…HAQN. Residues 10–17, 57–61, 119–122, 181–188, 229–233, and 294–297 each bind GTP; these read GRPNVGKS, DTGGI, NKVD, DTAGM, and NKWD. The KH-like domain maps to 352–436; that stretch reads LRISSSVLND…PIHLIARKRK (85 aa).

It belongs to the TRAFAC class TrmE-Era-EngA-EngB-Septin-like GTPase superfamily. EngA (Der) GTPase family. As to quaternary structure, associates with the 50S ribosomal subunit.

Its function is as follows. GTPase that plays an essential role in the late steps of ribosome biogenesis. This Lactococcus lactis subsp. cremoris (strain SK11) protein is GTPase Der.